Consider the following 140-residue polypeptide: Transcription antitermination protein NusB (140 aa).

The protein belongs to the NusB family.

Its function is as follows. Involved in transcription antitermination. Required for transcription of ribosomal RNA (rRNA) genes. Binds specifically to the boxA antiterminator sequence of the ribosomal RNA (rrn) operons. The sequence is that of Transcription antitermination protein NusB from Sorangium cellulosum (strain So ce56) (Polyangium cellulosum (strain So ce56)).